The chain runs to 163 residues: Nucleotide-binding protein Pnap_1080 (163 aa).

This sequence belongs to the YajQ family.

In terms of biological role, nucleotide-binding protein. This chain is Nucleotide-binding protein Pnap_1080, found in Polaromonas naphthalenivorans (strain CJ2).